A 123-amino-acid chain; its full sequence is Fluoride-specific ion channel FluC (123 aa).

4 consecutive transmembrane segments (helical) span residues 7–27 (LLLIIGGGLGALARYYISGIL), 39–59 (LVNSIASFILGYLYGLLFFGF), 67–87 (IFLGTGFCGGLSTFSTFSYET), and 100–120 (FMNVVANVLVTITLVFLGFIL). G75 and S78 together coordinate Na(+).

Belongs to the fluoride channel Fluc/FEX (TC 1.A.43) family.

The protein localises to the cell membrane. The enzyme catalyses fluoride(in) = fluoride(out). Its activity is regulated as follows. Na(+) is not transported, but it plays an essential structural role and its presence is essential for fluoride channel function. Fluoride-specific ion channel. Important for reducing fluoride concentration in the cell, thus reducing its toxicity. The sequence is that of Fluoride-specific ion channel FluC from Pyrococcus abyssi (strain GE5 / Orsay).